The chain runs to 2291 residues: Protein Ycf2 B (2291 aa).

Position 1642 to 1649 (1642 to 1649 (GSIGTGRS)) interacts with ATP.

The protein belongs to the Ycf2 family.

The protein localises to the plastid. The protein resides in the chloroplast stroma. Functionally, probable ATPase of unknown function. Its presence in a non-photosynthetic plant (Epifagus virginiana) and experiments in tobacco indicate that it has an essential function which is probably not related to photosynthesis. In Atropa belladonna (Belladonna), this protein is Protein Ycf2 B (ycf2-B).